Here is an 890-residue protein sequence, read N- to C-terminus: Translation initiation factor IF-2 (890 aa).

A disordered region spans residues 45 to 304 (LIDHLNQKNS…LQQGFQKPAQ (260 aa)). Residues 67 to 81 (STLNIPGTGGKSKSV) are compositionally biased toward polar residues. Residues 92–217 (VKRDPQEAER…RMAEENKWID (126 aa)) are compositionally biased toward basic and acidic residues. The span at 252–266 (GRGRNAKAARPKKGN) shows a compositional bias: basic residues. Positions 267–280 (KHAESKADREEARA) are enriched in basic and acidic residues. Residues 389–558 (PRAPVVTIMG…LLQAEVLELK (170 aa)) form the tr-type G domain. A G1 region spans residues 398–405 (GHVDHGKT). 398 to 405 (GHVDHGKT) serves as a coordination point for GTP. A G2 region spans residues 423 to 427 (GITQH). Residues 444–447 (DTPG) form a G3 region. Residues 444 to 448 (DTPGH) and 498 to 501 (NKID) contribute to the GTP site. Residues 498–501 (NKID) are G4. Residues 534-536 (SAK) are G5. N6-acetyllysine is present on Lys-808.

This sequence belongs to the TRAFAC class translation factor GTPase superfamily. Classic translation factor GTPase family. IF-2 subfamily.

The protein localises to the cytoplasm. In terms of biological role, one of the essential components for the initiation of protein synthesis. Protects formylmethionyl-tRNA from spontaneous hydrolysis and promotes its binding to the 30S ribosomal subunits. Also involved in the hydrolysis of GTP during the formation of the 70S ribosomal complex. This chain is Translation initiation factor IF-2, found in Escherichia coli O81 (strain ED1a).